A 104-amino-acid polypeptide reads, in one-letter code: Secreted RxLR effector protein 54 (104 aa).

Positions 1–19 (MIFTLLGLALVATKSACIA) are cleaved as a signal peptide. The RxLR motif lies at 52–55 (RSLR). An N-linked (GlcNAc...) asparagine glycan is attached at Asn-64.

This sequence belongs to the RxLR effector family.

The protein resides in the secreted. It is found in the host chloroplast envelope. It localises to the host mitochondrion. The protein localises to the host nucleus. Its subcellular location is the host cytoplasm. Functionally, secreted effector that completely suppresses the host cell death induced by cell death-inducing proteins. This is Secreted RxLR effector protein 54 from Plasmopara viticola (Downy mildew of grapevine).